Here is a 141-residue protein sequence, read N- to C-terminus: ATP synthase epsilon chain (141 aa).

The protein belongs to the ATPase epsilon chain family. In terms of assembly, F-type ATPases have 2 components, CF(1) - the catalytic core - and CF(0) - the membrane proton channel. CF(1) has five subunits: alpha(3), beta(3), gamma(1), delta(1), epsilon(1). CF(0) has three main subunits: a, b and c.

Its subcellular location is the cell inner membrane. Its function is as follows. Produces ATP from ADP in the presence of a proton gradient across the membrane. The sequence is that of ATP synthase epsilon chain from Pseudomonas syringae pv. syringae (strain B728a).